Consider the following 155-residue polypeptide: Small ribosomal subunit protein uS7c (155 aa).

The protein belongs to the universal ribosomal protein uS7 family. As to quaternary structure, part of the 30S ribosomal subunit.

The protein localises to the plastid. It is found in the chloroplast. One of the primary rRNA binding proteins, it binds directly to 16S rRNA where it nucleates assembly of the head domain of the 30S subunit. The polypeptide is Small ribosomal subunit protein uS7c (rps7) (Cornus mas (Cornelian cherry dogwood)).